We begin with the raw amino-acid sequence, 103 residues long: Large ribosomal subunit protein bL21 (103 aa).

It belongs to the bacterial ribosomal protein bL21 family. In terms of assembly, part of the 50S ribosomal subunit. Contacts protein L20.

This protein binds to 23S rRNA in the presence of protein L20. This is Large ribosomal subunit protein bL21 from Sodalis glossinidius (strain morsitans).